The following is a 152-amino-acid chain: Xanthine-guanine phosphoribosyltransferase (152 aa).

Residues R37–G38, R69, and D88–T96 contribute to the 5-phospho-alpha-D-ribose 1-diphosphate site. Residue R69 coordinates GMP. A Mg(2+)-binding site is contributed by D89. Guanine-binding residues include D92 and I135. Positions 92 and 135 each coordinate xanthine. Residues D92 to T96 and W134 to I135 each bind GMP.

The protein belongs to the purine/pyrimidine phosphoribosyltransferase family. XGPT subfamily. Homotetramer. Mg(2+) serves as cofactor.

It is found in the cell inner membrane. It catalyses the reaction GMP + diphosphate = guanine + 5-phospho-alpha-D-ribose 1-diphosphate. The enzyme catalyses XMP + diphosphate = xanthine + 5-phospho-alpha-D-ribose 1-diphosphate. The catalysed reaction is IMP + diphosphate = hypoxanthine + 5-phospho-alpha-D-ribose 1-diphosphate. It functions in the pathway purine metabolism; GMP biosynthesis via salvage pathway; GMP from guanine: step 1/1. The protein operates within purine metabolism; XMP biosynthesis via salvage pathway; XMP from xanthine: step 1/1. Functionally, purine salvage pathway enzyme that catalyzes the transfer of the ribosyl-5-phosphate group from 5-phospho-alpha-D-ribose 1-diphosphate (PRPP) to the N9 position of the 6-oxopurines guanine and xanthine to form the corresponding ribonucleotides GMP (guanosine 5'-monophosphate) and XMP (xanthosine 5'-monophosphate), with the release of PPi. To a lesser extent, also acts on hypoxanthine. The chain is Xanthine-guanine phosphoribosyltransferase from Salmonella choleraesuis (strain SC-B67).